A 393-amino-acid chain; its full sequence is S-adenosylmethionine synthase (393 aa).

E9 is a Mg(2+) binding site. H15 lines the ATP pocket. Position 43 (E43) interacts with K(+). L-methionine is bound by residues E56 and Q99. Residues 167–169 (DGK), 235–238 (SGRF), D246, 252–253 (RK), A269, K273, and K277 contribute to the ATP site. D246 provides a ligand contact to L-methionine. K277 contacts L-methionine.

The protein belongs to the AdoMet synthase family. In terms of assembly, homotetramer. Requires Mn(2+) as cofactor. The cofactor is Mg(2+). It depends on Co(2+) as a cofactor. K(+) is required as a cofactor.

It is found in the cytoplasm. It carries out the reaction L-methionine + ATP + H2O = S-adenosyl-L-methionine + phosphate + diphosphate. It functions in the pathway amino-acid biosynthesis; S-adenosyl-L-methionine biosynthesis; S-adenosyl-L-methionine from L-methionine: step 1/1. Functionally, catalyzes the formation of S-adenosylmethionine from methionine and ATP. The reaction comprises two steps that are both catalyzed by the same enzyme: formation of S-adenosylmethionine (AdoMet) and triphosphate, and subsequent hydrolysis of the triphosphate. The polypeptide is S-adenosylmethionine synthase (SAMS) (Brassica rapa subsp. pekinensis (Chinese cabbage)).